The sequence spans 97 residues: Defensin-A2 (97 aa).

An N-terminal signal peptide occupies residues 1–19 (MRTLSLLLALLFLAAQTLA). A propeptide spanning residues 20–61 (QPIDEGAEEVITEEPEITETQDPTTIMLIERGIGGDSTDATR) is cleaved from the precursor. Disulfide bonds link C66-C93, C68-C82, and C72-C92. The propeptide occupies 96–97 (TS).

Belongs to the alpha-defensin family. In terms of tissue distribution, highly expressed in intestine, expressed at lower levels in spleen, and at very low levels in kidney and lung.

Its subcellular location is the secreted. Functionally, has antimicrobial activity. This chain is Defensin-A2, found in Ornithorhynchus anatinus (Duckbill platypus).